The sequence spans 282 residues: NADPH-dependent 7-cyano-7-deazaguanine reductase (282 aa).

Substrate is bound at residue Ile88–Ser90. An NADPH-binding site is contributed by Ser90–Lys91. Residue Cys190 is the Thioimide intermediate of the active site. The Proton donor role is filled by Asp197. His229 to Glu230 lines the substrate pocket. Arg258–Gly259 is a binding site for NADPH.

The protein belongs to the GTP cyclohydrolase I family. QueF type 2 subfamily. As to quaternary structure, homodimer.

The protein resides in the cytoplasm. It catalyses the reaction 7-aminomethyl-7-carbaguanine + 2 NADP(+) = 7-cyano-7-deazaguanine + 2 NADPH + 3 H(+). It functions in the pathway tRNA modification; tRNA-queuosine biosynthesis. In terms of biological role, catalyzes the NADPH-dependent reduction of 7-cyano-7-deazaguanine (preQ0) to 7-aminomethyl-7-deazaguanine (preQ1). This Escherichia coli (strain SMS-3-5 / SECEC) protein is NADPH-dependent 7-cyano-7-deazaguanine reductase.